The chain runs to 619 residues: DNA mismatch repair protein MutL (619 aa).

The protein belongs to the DNA mismatch repair MutL/HexB family.

Functionally, this protein is involved in the repair of mismatches in DNA. It is required for dam-dependent methyl-directed DNA mismatch repair. May act as a 'molecular matchmaker', a protein that promotes the formation of a stable complex between two or more DNA-binding proteins in an ATP-dependent manner without itself being part of a final effector complex. The chain is DNA mismatch repair protein MutL from Xylella fastidiosa (strain 9a5c).